Reading from the N-terminus, the 156-residue chain is Small ribosomal subunit protein uS7 (156 aa).

It belongs to the universal ribosomal protein uS7 family. As to quaternary structure, part of the 30S ribosomal subunit. Contacts proteins S9 and S11.

One of the primary rRNA binding proteins, it binds directly to 16S rRNA where it nucleates assembly of the head domain of the 30S subunit. Is located at the subunit interface close to the decoding center, probably blocks exit of the E-site tRNA. The chain is Small ribosomal subunit protein uS7 from Mesorhizobium japonicum (strain LMG 29417 / CECT 9101 / MAFF 303099) (Mesorhizobium loti (strain MAFF 303099)).